Here is a 363-residue protein sequence, read N- to C-terminus: 3,4-dihydroxy-2-butanone 4-phosphate synthase (363 aa).

The interval 1–201 is DHBP synthase; that stretch reads MTLSTAQEII…VADLIEYRNK (201 aa). D-ribulose 5-phosphate is bound by residues 27-28, aspartate 32, 140-144, and glutamate 164; these read RE and RAGHT. Glutamate 28 is a Mg(2+) binding site. Residue histidine 143 coordinates Mg(2+). The GTP cyclohydrolase II-like stretch occupies residues 202–363; sequence YETMIERISE…GLEIVEYVCS (162 aa).

The protein in the N-terminal section; belongs to the DHBP synthase family. This sequence in the C-terminal section; belongs to the GTP cyclohydrolase II family. Mg(2+) is required as a cofactor. It depends on Mn(2+) as a cofactor.

The catalysed reaction is D-ribulose 5-phosphate = (2S)-2-hydroxy-3-oxobutyl phosphate + formate + H(+). It participates in cofactor biosynthesis; riboflavin biosynthesis; 2-hydroxy-3-oxobutyl phosphate from D-ribulose 5-phosphate: step 1/1. Functionally, catalyzes the conversion of D-ribulose 5-phosphate to formate and 3,4-dihydroxy-2-butanone 4-phosphate. The chain is 3,4-dihydroxy-2-butanone 4-phosphate synthase (ribB) from Photobacterium phosphoreum.